The primary structure comprises 292 residues: Probable 2-(5''-triphosphoribosyl)-3'-dephosphocoenzyme-A synthase (292 aa).

The protein belongs to the CitG/MdcB family.

It catalyses the reaction 3'-dephospho-CoA + ATP = 2'-(5''-triphospho-alpha-D-ribosyl)-3'-dephospho-CoA + adenine. The protein is Probable 2-(5''-triphosphoribosyl)-3'-dephosphocoenzyme-A synthase of Shigella sonnei (strain Ss046).